We begin with the raw amino-acid sequence, 603 residues long: Baeyer-Villiger monooxygenase (603 aa).

FAD contacts are provided by residues glutamate 94, 102–105, aspartate 114, tyrosine 120, and valine 164; that span reads TWYW. 112-114 is a binding site for NADP(+); that stretch reads HCD. NADP(+) contacts are provided by residues 248 to 254, 271 to 272, and 386 to 387; these read TGATGVQ, RT, and KR.

The protein belongs to the FAD-binding monooxygenase family. FAD serves as cofactor.

Functionally, catalyzes a Baeyer-Villiger oxidation reaction, i.e. the insertion of an oxygen atom into a carbon-carbon bond adjacent to a carbonyl, which converts ketones to esters or lactones using NADPH and/or NADH as an electron donor. Thus, can convert bicyclo[3.2.0]hept-2-en-6-one into the oxidative lactone products 2-oxabicyclo[3.3.0]oct-6-en-3-one and 3-oxabicyclo[3.3.0]oct-6-en-2-one. Is also able to catalyze the sulfoxidation of methyl phenyl sulfide (thioanisole). The protein is Baeyer-Villiger monooxygenase of Streptomyces coelicolor (strain ATCC BAA-471 / A3(2) / M145).